The chain runs to 611 residues: Putative pentatricopeptide repeat-containing protein At1g56570 (611 aa).

PPR repeat units follow at residues 44 to 74 (HHIL…MPDR), 75 to 109 (DVVA…GTSP), 110 to 144 (NEFT…GMEG), 145 to 176 (SLYV…IKVK), 177 to 211 (NDVT…NAEV), 212 to 246 (TPYC…GFQS), 247 to 281 (NLPV…DLIT), 282 to 311 (WNTL…GFVP), 312 to 346 (NCYT…GFNK), 347 to 377 (NVEL…IVDR), 379 to 413 (NLVS…GIRP), 414 to 444 (DRIV…MESE), and 450 to 480 (DRDI…MPFK). A type E motif region spans residues 485–561 (TWGAILGACK…EAGMSWILVE (77 aa)). Positions 562 to 592 (NQVFSFAVSDKMCPNASSVYSVLGLLIEETR) are type E(+) motif.

The protein belongs to the PPR family. PCMP-E subfamily.

The sequence is that of Putative pentatricopeptide repeat-containing protein At1g56570 (PCMP-E64) from Arabidopsis thaliana (Mouse-ear cress).